The primary structure comprises 255 residues: F-box/SPRY domain-containing protein 1 (255 aa).

One can recognise an F-box domain in the interval aspartate 3 to histidine 51. The B30.2/SPRY domain maps to methionine 61–leucine 253.

The protein belongs to the FBXO45/Fsn family. In terms of assembly, component of an E3 ubiquitin ligase complex composed of hiw and Fsn.

The protein localises to the synapse. It participates in protein modification; protein ubiquitination. Required in the presynaptic motoneuron to down-regulate the levels of wnd and restrain synaptic terminal growth at the neuromuscular junction (NMJ). The polypeptide is F-box/SPRY domain-containing protein 1 (Drosophila willistoni (Fruit fly)).